Consider the following 1128-residue polypeptide: Lysylphosphatidylglycerol biosynthesis bifunctional protein LysX (1128 aa).

The interval 1-47 (MDNPPPTGVAPRHLPPGSVHTGKVTASLSHRRPDSVQDAPPAPVPHR) is disordered. The segment at 1–632 (MDNPPPTGVA…GLHADGSPPD (632 aa)) is phosphatidylglycerol lysyltransferase. Transmembrane regions (helical) follow at residues 55–75 (VPHI…LWSL), 97–117 (APDT…AIAS), 121–141 (IAWW…GLRF), 147–167 (INAL…IAAW), 184–204 (GVLV…VEVF), and 240–260 (FVNV…VLTL). The disordered stretch occupies residues 619-644 (DTLTGLHADGSPPDWPKPDLLDSGPR). Residues 633–1128 (WPKPDLLDSG…TLPFPLVKPR (496 aa)) form a lysine--tRNA ligase region. Residues 634 to 644 (PKPDLLDSGPR) show a composition bias toward basic and acidic residues. The Mg(2+) site is built by Asp-1040 and Glu-1047.

This sequence in the N-terminal section; belongs to the LPG synthetase family. In the C-terminal section; belongs to the class-II aminoacyl-tRNA synthetase family. Mg(2+) is required as a cofactor.

The protein resides in the cell membrane. The catalysed reaction is tRNA(Lys) + L-lysine + ATP = L-lysyl-tRNA(Lys) + AMP + diphosphate. It carries out the reaction L-lysyl-tRNA(Lys) + a 1,2-diacyl-sn-glycero-3-phospho-(1'-sn-glycerol) = a 1,2-diacyl-sn-glycero-3-phospho-1'-(3'-O-L-lysyl)-sn-glycerol + tRNA(Lys). Catalyzes the production of L-lysyl-tRNA(Lys)transfer and the transfer of a lysyl group from L-lysyl-tRNA(Lys) to membrane-bound phosphatidylglycerol (PG), which produces lysylphosphatidylglycerol (LPG), one of the components of the bacterial membrane with a positive net charge. LPG synthesis contributes to the resistance to cationic antimicrobial peptides (CAMPs) and likely protects M.tuberculosis against the CAMPs produced by competiting microorganisms (bacteriocins). In fact, the modification of anionic phosphatidylglycerol with positively charged L-lysine results in repulsion of the peptides. In Nocardia farcinica (strain IFM 10152), this protein is Lysylphosphatidylglycerol biosynthesis bifunctional protein LysX (lysX).